The primary structure comprises 695 residues: DNA ligase (695 aa).

NAD(+)-binding positions include 36-40 (DADYD), 85-86 (SL), and Glu123. Lys125 functions as the N6-AMP-lysine intermediate in the catalytic mechanism. NAD(+)-binding residues include Arg146, Glu182, Lys318, and Lys342. The Zn(2+) site is built by Cys436, Cys439, Cys454, and Cys460. The BRCT domain occupies 617–695 (LQSGDLAGKT…EDGLKALLSQ (79 aa)).

Belongs to the NAD-dependent DNA ligase family. LigA subfamily. It depends on Mg(2+) as a cofactor. Requires Mn(2+) as cofactor.

The catalysed reaction is NAD(+) + (deoxyribonucleotide)n-3'-hydroxyl + 5'-phospho-(deoxyribonucleotide)m = (deoxyribonucleotide)n+m + AMP + beta-nicotinamide D-nucleotide.. In terms of biological role, DNA ligase that catalyzes the formation of phosphodiester linkages between 5'-phosphoryl and 3'-hydroxyl groups in double-stranded DNA using NAD as a coenzyme and as the energy source for the reaction. It is essential for DNA replication and repair of damaged DNA. The sequence is that of DNA ligase from Bordetella avium (strain 197N).